A 469-amino-acid chain; its full sequence is Ribulose bisphosphate carboxylase large chain (469 aa).

Lys-8 is modified (N6,N6,N6-trimethyllysine). Residues Asn-117 and Thr-167 each coordinate substrate. Catalysis depends on Lys-169, which acts as the Proton acceptor. Lys-171 lines the substrate pocket. Positions 195, 197, and 198 each coordinate Mg(2+). Lys-195 is subject to N6-carboxylysine. Catalysis depends on His-288, which acts as the Proton acceptor. Residues Arg-289, His-321, and Ser-373 each coordinate substrate.

Belongs to the RuBisCO large chain family. Type I subfamily. As to quaternary structure, heterohexadecamer of 8 large chains and 8 small chains; disulfide-linked. The disulfide link is formed within the large subunit homodimers. Requires Mg(2+) as cofactor. Post-translationally, the disulfide bond which can form in the large chain dimeric partners within the hexadecamer appears to be associated with oxidative stress and protein turnover.

The protein localises to the plastid. It localises to the chloroplast. The catalysed reaction is 2 (2R)-3-phosphoglycerate + 2 H(+) = D-ribulose 1,5-bisphosphate + CO2 + H2O. The enzyme catalyses D-ribulose 1,5-bisphosphate + O2 = 2-phosphoglycolate + (2R)-3-phosphoglycerate + 2 H(+). Functionally, ruBisCO catalyzes two reactions: the carboxylation of D-ribulose 1,5-bisphosphate, the primary event in carbon dioxide fixation, as well as the oxidative fragmentation of the pentose substrate in the photorespiration process. Both reactions occur simultaneously and in competition at the same active site. In Persicaria senticosa (Knotweed), this protein is Ribulose bisphosphate carboxylase large chain.